Consider the following 200-residue polypeptide: Crossover junction endodeoxyribonuclease RuvC (200 aa).

Active-site residues include Asp-18, Glu-78, and Asp-151. The Mg(2+) site is built by Asp-18, Glu-78, and Asp-151.

The protein belongs to the RuvC family. Homodimer which binds Holliday junction (HJ) DNA. The HJ becomes 2-fold symmetrical on binding to RuvC with unstacked arms; it has a different conformation from HJ DNA in complex with RuvA. In the full resolvosome a probable DNA-RuvA(4)-RuvB(12)-RuvC(2) complex forms which resolves the HJ. Mg(2+) is required as a cofactor.

It localises to the cytoplasm. It catalyses the reaction Endonucleolytic cleavage at a junction such as a reciprocal single-stranded crossover between two homologous DNA duplexes (Holliday junction).. In terms of biological role, the RuvA-RuvB-RuvC complex processes Holliday junction (HJ) DNA during genetic recombination and DNA repair. Endonuclease that resolves HJ intermediates. Cleaves cruciform DNA by making single-stranded nicks across the HJ at symmetrical positions within the homologous arms, yielding a 5'-phosphate and a 3'-hydroxyl group; requires a central core of homology in the junction. The consensus cleavage sequence is 5'-(A/T)TT(C/G)-3'. Cleavage occurs on the 3'-side of the TT dinucleotide at the point of strand exchange. HJ branch migration catalyzed by RuvA-RuvB allows RuvC to scan DNA until it finds its consensus sequence, where it cleaves and resolves the cruciform DNA. This Cytophaga hutchinsonii (strain ATCC 33406 / DSM 1761 / CIP 103989 / NBRC 15051 / NCIMB 9469 / D465) protein is Crossover junction endodeoxyribonuclease RuvC.